The following is a 508-amino-acid chain: Photosystem II CP47 reaction center protein (508 aa).

The next 6 membrane-spanning stretches (helical) occupy residues 21-36, 101-115, 140-156, 203-218, 237-252, and 457-472; these read AVHIMHTALVSGWAGS, IILSGLLFLAAIWHW, GIHLFLSGLLCFGFGAF, IAAGILGILAGLFHLS, VLSSSIAAVFFAAFIV, and CFALLFFFGHIWHGAR.

Belongs to the PsbB/PsbC family. PsbB subfamily. As to quaternary structure, PSII is composed of 1 copy each of membrane proteins PsbA, PsbB, PsbC, PsbD, PsbE, PsbF, PsbH, PsbI, PsbJ, PsbK, PsbL, PsbM, PsbT, PsbX, PsbY, PsbZ, Psb30/Ycf12, at least 3 peripheral proteins of the oxygen-evolving complex and a large number of cofactors. It forms dimeric complexes. The cofactor is Binds multiple chlorophylls. PSII binds additional chlorophylls, carotenoids and specific lipids..

Its subcellular location is the plastid. It localises to the chloroplast thylakoid membrane. In terms of biological role, one of the components of the core complex of photosystem II (PSII). It binds chlorophyll and helps catalyze the primary light-induced photochemical processes of PSII. PSII is a light-driven water:plastoquinone oxidoreductase, using light energy to abstract electrons from H(2)O, generating O(2) and a proton gradient subsequently used for ATP formation. This Chara vulgaris (Common stonewort) protein is Photosystem II CP47 reaction center protein.